Here is a 182-residue protein sequence, read N- to C-terminus: 3-hydroxyanthranilate 3,4-dioxygenase (182 aa).

An O2-binding site is contributed by Arg46. Residues His50, Glu56, and His96 each contribute to the Fe cation site. A substrate-binding site is contributed by Glu56. Residues Arg100 and Glu111 each coordinate substrate. 4 residues coordinate Fe cation: Cys126, Cys129, Cys163, and Cys166.

The protein belongs to the 3-HAO family. As to quaternary structure, homodimer. It depends on Fe(2+) as a cofactor.

The catalysed reaction is 3-hydroxyanthranilate + O2 = (2Z,4Z)-2-amino-3-carboxymuconate 6-semialdehyde. Its pathway is cofactor biosynthesis; NAD(+) biosynthesis; quinolinate from L-kynurenine: step 3/3. Catalyzes the oxidative ring opening of 3-hydroxyanthranilate to 2-amino-3-carboxymuconate semialdehyde, which spontaneously cyclizes to quinolinate. The polypeptide is 3-hydroxyanthranilate 3,4-dioxygenase (Brucella anthropi (strain ATCC 49188 / DSM 6882 / CCUG 24695 / JCM 21032 / LMG 3331 / NBRC 15819 / NCTC 12168 / Alc 37) (Ochrobactrum anthropi)).